A 435-amino-acid chain; its full sequence is MKGFFENLFRQNVRSVINTGKKVGARAAAREIINQEWGYPLANHEVLFLTNVYQPKHMKRHPFHIVRGTVAPLAVTLPLGFFVLNYFGVISSKLGLLIALSSFIGGLVIWTISIIFDSLYDQQHTYEVKRGLVMGMMMFIISEVMFFFSFFWSYFYISLSPNIAIGCVWPPYGLTVYSYMGLPLLNTVLLLLSGAILTDGYTILTEQKAVHEKNEKVLAVEEAFKNLMNLYKTKNSINTLTFVDERRDKFFGKESRQEDKIAEQKLIAISAGVKELRDLDWDLYFFENPENIEPNYKEPTNLSVIEYALITIYLKKRNKVIKTRLYFTLLCAVVFLACQGYEYFFAPFSMNDGIYGSLFFLLTGFHGFHVLVGSILIGIITIRFIVGNFNLLNVGTNFQIYKNKSTGFACTLFYWHFVDIVWIFLYIVIYWWGSR.

7 helical membrane passes run 70 to 90, 96 to 116, 132 to 152, 176 to 196, 325 to 345, 360 to 380, and 412 to 432; these read VAPLAVTLPLGFFVLNYFGVI, LLIALSSFIGGLVIWTISIIF, LVMGMMMFIISEVMFFFSFFW, VYSYMGLPLLNTVLLLLSGAI, LYFTLLCAVVFLACQGYEYFF, FLLTGFHGFHVLVGSILIGII, and LFYWHFVDIVWIFLYIVIYWW.

This sequence belongs to the cytochrome c oxidase subunit 3 family. Component of the cytochrome c oxidase (complex IV, CIV), a multisubunit enzyme composed of a catalytic core of 3 subunits and several supernumerary subunits. The complex exists as a monomer or a dimer and forms supercomplexes (SCs) in the inner mitochondrial membrane with ubiquinol-cytochrome c oxidoreductase (cytochrome b-c1 complex, complex III, CIII).

It is found in the mitochondrion inner membrane. It carries out the reaction 4 Fe(II)-[cytochrome c] + O2 + 8 H(+)(in) = 4 Fe(III)-[cytochrome c] + 2 H2O + 4 H(+)(out). Component of the cytochrome c oxidase, the last enzyme in the mitochondrial electron transport chain which drives oxidative phosphorylation. The respiratory chain contains 3 multisubunit complexes succinate dehydrogenase (complex II, CII), ubiquinol-cytochrome c oxidoreductase (cytochrome b-c1 complex, complex III, CIII) and cytochrome c oxidase (complex IV, CIV), that cooperate to transfer electrons derived from NADH and succinate to molecular oxygen, creating an electrochemical gradient over the inner membrane that drives transmembrane transport and the ATP synthase. Cytochrome c oxidase is the component of the respiratory chain that catalyzes the reduction of oxygen to water. Electrons originating from reduced cytochrome c in the intermembrane space (IMS) are transferred via the dinuclear copper A center (CU(A)) of subunit 2 and heme A of subunit 1 to the active site in subunit 1, a binuclear center (BNC) formed by heme A3 and copper B (CU(B)). The BNC reduces molecular oxygen to 2 water molecules using 4 electrons from cytochrome c in the IMS and 4 protons from the mitochondrial matrix. The polypeptide is Cytochrome c oxidase subunit 3 (cox3) (Dictyostelium discoideum (Social amoeba)).